The chain runs to 434 residues: UDP-N-acetylmuramate--L-alanine ligase (434 aa).

108–114 contributes to the ATP binding site; the sequence is GSHGKTT.

Belongs to the MurCDEF family.

Its subcellular location is the cytoplasm. The catalysed reaction is UDP-N-acetyl-alpha-D-muramate + L-alanine + ATP = UDP-N-acetyl-alpha-D-muramoyl-L-alanine + ADP + phosphate + H(+). Its pathway is cell wall biogenesis; peptidoglycan biosynthesis. Its function is as follows. Cell wall formation. The polypeptide is UDP-N-acetylmuramate--L-alanine ligase (Geobacillus kaustophilus (strain HTA426)).